The sequence spans 434 residues: Forkhead box protein A2 (434 aa).

Residues 149 to 243 constitute a DNA-binding region (fork-head); that stretch reads KPPYSYISLI…ENGCYLRRQK (95 aa). Basic and acidic residues predominate over residues 249 to 262; the sequence is KKPSLREGGGKKLS. The segment at 249-339 is disordered; it reads KKPSLREGGG…VLSHEAQSHL (91 aa). Low complexity-rich tracts occupy residues 263–291 and 317–333; these read EGSS…SSSP and ASQA…VLSH.

The protein localises to the nucleus. In terms of biological role, acts as a transcriptional activator during early development, limiting the extent of mesoderm formation in the gastrula. Binds to DNA via the target sequence 5'-GT[AC]AACA-3', with 5'-GTAAACA-3' being the preferred binding site. This chain is Forkhead box protein A2, found in Xenopus tropicalis (Western clawed frog).